A 520-amino-acid chain; its full sequence is Peptide chain release factor 3 (520 aa).

Residues 8–277 enclose the tr-type G domain; the sequence is ESRKTFAIIS…FAPMPNARQT (270 aa). GTP-binding positions include 17–24, 85–89, and 139–142; these read SHPDAGKT, DTPGH, and NKLD.

The protein belongs to the TRAFAC class translation factor GTPase superfamily. Classic translation factor GTPase family. PrfC subfamily.

The protein localises to the cytoplasm. In terms of biological role, increases the formation of ribosomal termination complexes and stimulates activities of RF-1 and RF-2. It binds guanine nucleotides and has strong preference for UGA stop codons. It may interact directly with the ribosome. The stimulation of RF-1 and RF-2 is significantly reduced by GTP and GDP, but not by GMP. The chain is Peptide chain release factor 3 from Staphylococcus aureus (strain JH1).